The primary structure comprises 518 residues: ATP synthase subunit alpha (518 aa).

Residue 170–177 (GDRQTGKT) coordinates ATP.

Belongs to the ATPase alpha/beta chains family. In terms of assembly, F-type ATPases have 2 components, CF(1) - the catalytic core - and CF(0) - the membrane proton channel. CF(1) has five subunits: alpha(3), beta(3), gamma(1), delta(1), epsilon(1). CF(0) has three main subunits: a(1), b(2) and c(9-12). The alpha and beta chains form an alternating ring which encloses part of the gamma chain. CF(1) is attached to CF(0) by a central stalk formed by the gamma and epsilon chains, while a peripheral stalk is formed by the delta and b chains.

Its subcellular location is the cell membrane. It carries out the reaction ATP + H2O + 4 H(+)(in) = ADP + phosphate + 5 H(+)(out). Its function is as follows. Produces ATP from ADP in the presence of a proton gradient across the membrane. The alpha chain is a regulatory subunit. In Mycoplasmoides gallisepticum (strain R(low / passage 15 / clone 2)) (Mycoplasma gallisepticum), this protein is ATP synthase subunit alpha.